The following is a 128-amino-acid chain: MAIWQGASRRLSTGAKVWRAAKKHKREMGRPAAETQVSEVIKRKIVRCRGANLKVKLEKTNYANVFDQANNVCKKVAVTKVLDNKANKHYIRRNVMTKGAIIETEMGKAKVTSRPGQDGVVNAVLITE.

It belongs to the eukaryotic ribosomal protein eS8 family. As to quaternary structure, part of the 30S ribosomal subunit.

This is Small ribosomal subunit protein eS8 from Methanococcus maripaludis (strain C5 / ATCC BAA-1333).